The following is a 205-amino-acid chain: Large ribosomal subunit protein bL17c (205 aa).

The transit peptide at 1-89 (MASASTTWSM…VIDNGGRVFA (89 aa)) directs the protein to the chloroplast.

This sequence belongs to the bacterial ribosomal protein bL17 family. As to quaternary structure, part of the 50S ribosomal subunit.

The protein resides in the plastid. It is found in the chloroplast. This protein binds directly to 23S ribosomal RNA. The chain is Large ribosomal subunit protein bL17c (RPL17) from Nicotiana tabacum (Common tobacco).